Consider the following 87-residue polypeptide: Neurotoxin Cex1 (87 aa).

The first 19 residues, 1 to 19, serve as a signal peptide directing secretion; the sequence is MNSLLMITTCLVLFGTVWA. Residues 20–85 form the LCN-type CS-alpha/beta domain; sequence KEGYLVSKST…TYPIPGKSCG (66 aa). Intrachain disulfides connect Cys-31–Cys-84, Cys-35–Cys-60, Cys-44–Cys-65, and Cys-48–Cys-67. At Cys-84 the chain carries Cysteine amide. Positions 85–87 are excised as a propeptide; sequence GKK.

The protein belongs to the long (4 C-C) scorpion toxin superfamily. Sodium channel inhibitor family. Beta subfamily. Expressed by the venom gland.

The protein localises to the secreted. Its function is as follows. Beta toxins bind voltage-independently at site-4 of sodium channels (Nav) and shift the voltage of activation toward more negative potentials thereby affecting sodium channel activation and promoting spontaneous and repetitive firing. This is Neurotoxin Cex1 from Centruroides exilicauda (Bark scorpion).